The following is a 128-amino-acid chain: Large ribosomal subunit protein bL17 (128 aa).

The protein belongs to the bacterial ribosomal protein bL17 family. Part of the 50S ribosomal subunit. Contacts protein L32.

The sequence is that of Large ribosomal subunit protein bL17 from Pseudomonas fluorescens (strain ATCC BAA-477 / NRRL B-23932 / Pf-5).